The chain runs to 162 residues: Nucleotide-binding protein Franean1_6074 (162 aa).

Belongs to the YajQ family.

Its function is as follows. Nucleotide-binding protein. This chain is Nucleotide-binding protein Franean1_6074, found in Parafrankia sp. (strain EAN1pec).